The following is a 169-amino-acid chain: Ribonuclease H (169 aa).

One can recognise an RNase H type-1 domain in the interval 3-159 (AHAALTLYTD…CDRLATDAAR (157 aa)). 4 residues coordinate Mg(2+): aspartate 12, glutamate 63, aspartate 87, and aspartate 151.

This sequence belongs to the RNase H family. As to quaternary structure, monomer. The cofactor is Mg(2+).

It is found in the cytoplasm. The catalysed reaction is Endonucleolytic cleavage to 5'-phosphomonoester.. In terms of biological role, endonuclease that specifically degrades the RNA of RNA-DNA hybrids. In Treponema pallidum subsp. pallidum (strain SS14), this protein is Ribonuclease H.